We begin with the raw amino-acid sequence, 197 residues long: Large ribosomal subunit protein bL25 (197 aa).

This sequence belongs to the bacterial ribosomal protein bL25 family. CTC subfamily. Part of the 50S ribosomal subunit; part of the 5S rRNA/L5/L18/L25 subcomplex. Contacts the 5S rRNA. Binds to the 5S rRNA independently of L5 and L18.

In terms of biological role, this is one of the proteins that binds to the 5S RNA in the ribosome where it forms part of the central protuberance. This Streptomyces avermitilis (strain ATCC 31267 / DSM 46492 / JCM 5070 / NBRC 14893 / NCIMB 12804 / NRRL 8165 / MA-4680) protein is Large ribosomal subunit protein bL25.